A 621-amino-acid chain; its full sequence is Methionine--tRNA ligase (621 aa).

Residues 11–21 (PYANGPRHIGH) carry the 'HIGH' region motif. Zn(2+)-binding residues include Cys-143, Cys-146, Cys-156, and Cys-159. A 'KMSKS' region motif is present at residues 347-351 (KFSSS). Ser-350 provides a ligand contact to ATP.

Belongs to the class-I aminoacyl-tRNA synthetase family. MetG type 1 subfamily. In terms of assembly, monomer. Zn(2+) serves as cofactor.

Its subcellular location is the cytoplasm. It carries out the reaction tRNA(Met) + L-methionine + ATP = L-methionyl-tRNA(Met) + AMP + diphosphate. In terms of biological role, is required not only for elongation of protein synthesis but also for the initiation of all mRNA translation through initiator tRNA(fMet) aminoacylation. The polypeptide is Methionine--tRNA ligase (Bifidobacterium longum subsp. infantis (strain ATCC 15697 / DSM 20088 / JCM 1222 / NCTC 11817 / S12)).